An 82-amino-acid polypeptide reads, in one-letter code: UPF0180 protein BALH_1248 (82 aa).

This sequence belongs to the UPF0180 family.

The protein is UPF0180 protein BALH_1248 of Bacillus thuringiensis (strain Al Hakam).